Consider the following 443-residue polypeptide: Xaa-Pro dipeptidase (443 aa).

Mn(2+)-binding residues include aspartate 246, aspartate 257, histidine 339, glutamate 384, and glutamate 423.

It belongs to the peptidase M24B family. Bacterial-type prolidase subfamily. Requires Mn(2+) as cofactor.

The enzyme catalyses Xaa-L-Pro dipeptide + H2O = an L-alpha-amino acid + L-proline. Splits dipeptides with a prolyl residue in the C-terminal position. This chain is Xaa-Pro dipeptidase, found in Escherichia coli O7:K1 (strain IAI39 / ExPEC).